Reading from the N-terminus, the 311-residue chain is Olfactory receptor 4S2 (311 aa).

Residues 1–23 (MEKINNVTEFIFWGLSQSPEIEK) are Extracellular-facing. N6 is a glycosylation site (N-linked (GlcNAc...) asparagine). A helical membrane pass occupies residues 24–47 (VCFVVFSFFYIIILLGNLLIMLTV). The Cytoplasmic portion of the chain corresponds to 48-55 (CLSNLFKS). A helical membrane pass occupies residues 56–77 (PMYFFLSFLSFVDICYSSVTAP). Topologically, residues 78-98 (KMIVDLLAKDKTISYVGCMLQ) are extracellular. A disulfide bridge connects residues C95 and C187. A helical membrane pass occupies residues 99–118 (LFGVHFFGCTEIFILTVMAY). Residues 119–137 (DRYVAICKPLHYMTIMNRE) lie on the Cytoplasmic side of the membrane. A helical membrane pass occupies residues 138–156 (TCNKMLLGTWVGGFLHSII). Residues 157–193 (QVALVVQLPFCGPNEIDHYFCDVHPVLKLACTETYIV) lie on the Extracellular side of the membrane. Residues 194-217 (GVVVTANSGTIALGSFVILLISYS) traverse the membrane as a helical segment. The Cytoplasmic segment spans residues 218 to 233 (IILVSLRKQSAEGRRK). The chain crosses the membrane as a helical span at residues 234-256 (ALSTCGSHIAMVVIFFGPCTFMY). Residues 257-267 (MRPDTTFSEDK) are Extracellular-facing. The chain crosses the membrane as a helical span at residues 268 to 287 (MVAVFYTIITPMLNPLIYTL). The Cytoplasmic portion of the chain corresponds to 288-311 (RNAEVKNAMKKLWGRNVFLEAKGK).

This sequence belongs to the G-protein coupled receptor 1 family.

The protein resides in the cell membrane. In terms of biological role, odorant receptor. The sequence is that of Olfactory receptor 4S2 (OR4S2) from Homo sapiens (Human).